The following is a 415-amino-acid chain: Dynein assembly factor with WD repeat domains 1 (415 aa).

WD repeat units lie at residues 90 to 129 (AHILPLTNVALNKAGSCFITGSYDRTCKVWDTASGEELHT), 132 to 174 (GHKN…HTFR), 175 to 214 (GHTAEIVCLSFNPQSTVVATGSMDTTAKLWDIQNGEEVVT), 217 to 256 (GHLAEIISLSFDTSGDRIITGSFDHTVVVWDASTGRKVHT), 259 to 298 (GHCAEISSALFNWDCSLILTGSMDKTCMLWDATSGKYVAT), 301 to 340 (GHDDEILDSCFDYTGKLIATASADGTARVYNATTRKCVTK), 343 to 384 (GHEG…QVLE), and 386 to 415 (HTDEIFSCAFNYKGNIVITGSKDNSCRIWR).

The protein belongs to the WD repeat WDR69 family. In terms of assembly, interacts with IFT46. In early mouse embryos, expression is limited to distal, motile ciliated cells of the node.

The protein localises to the cytoplasm. It localises to the cytoskeleton. Its subcellular location is the flagellum basal body. It is found in the flagellum axoneme. Required for axonemal dynein assembly and ciliary motility in ciliated organs, including Kupffer's vesicle, during embryogenesis. Facilitates the onset of robust cilia motility during development. The protein is Dynein assembly factor with WD repeat domains 1 of Mus musculus (Mouse).